The primary structure comprises 324 residues: Acetyl-coenzyme A carboxylase carboxyl transferase subunit alpha (324 aa).

Residues 37–291 (ILEEKLENLE…DLMIQKTFQQ (255 aa)) form the CoA carboxyltransferase C-terminal domain.

It belongs to the AccA family. In terms of assembly, acetyl-CoA carboxylase is a heterohexamer composed of biotin carboxyl carrier protein (AccB), biotin carboxylase (AccC) and two subunits each of ACCase subunit alpha (AccA) and ACCase subunit beta (AccD).

It is found in the cytoplasm. It catalyses the reaction N(6)-carboxybiotinyl-L-lysyl-[protein] + acetyl-CoA = N(6)-biotinyl-L-lysyl-[protein] + malonyl-CoA. The protein operates within lipid metabolism; malonyl-CoA biosynthesis; malonyl-CoA from acetyl-CoA: step 1/1. Functionally, component of the acetyl coenzyme A carboxylase (ACC) complex. First, biotin carboxylase catalyzes the carboxylation of biotin on its carrier protein (BCCP) and then the CO(2) group is transferred by the carboxyltransferase to acetyl-CoA to form malonyl-CoA. The chain is Acetyl-coenzyme A carboxylase carboxyl transferase subunit alpha from Bacillus cereus (strain ATCC 14579 / DSM 31 / CCUG 7414 / JCM 2152 / NBRC 15305 / NCIMB 9373 / NCTC 2599 / NRRL B-3711).